A 160-amino-acid polypeptide reads, in one-letter code: Gene 34 protein (160 aa).

Residues 1–11 (MDSPRGISTAT) show a composition bias toward polar residues. Residues 1-26 (MDSPRGISTATGDAHAEAAVSPAAEI) form a disordered region.

The chain is Gene 34 protein from Equus caballus (Horse).